The chain runs to 534 residues: CTP synthase (534 aa).

The segment at 1–266 is amidoligase domain; that stretch reads MKTKFIFVTG…DEQVVEKLNI (266 aa). Ser14 contributes to the CTP binding site. Ser14 is a binding site for UTP. ATP is bound by residues 15–20 and Asp72; that span reads SIGKGL. The Mg(2+) site is built by Asp72 and Glu140. Residues 147-149, 187-192, and Lys223 contribute to the CTP site; these read DIE and KTKPTQ. Residues 187–192 and Lys223 contribute to the UTP site; that span reads KTKPTQ. A Glutamine amidotransferase type-1 domain is found at 292-534; sequence RIAIVGKYVN…IAAALHNIKA (243 aa). Gly354 contributes to the L-glutamine binding site. Cys381 (nucleophile; for glutamine hydrolysis) is an active-site residue. Residues 382-385, Glu405, and Arg462 contribute to the L-glutamine site; that span reads LGMQ. Catalysis depends on residues His507 and Glu509.

Belongs to the CTP synthase family. In terms of assembly, homotetramer.

It carries out the reaction UTP + L-glutamine + ATP + H2O = CTP + L-glutamate + ADP + phosphate + 2 H(+). The enzyme catalyses L-glutamine + H2O = L-glutamate + NH4(+). It catalyses the reaction UTP + NH4(+) + ATP = CTP + ADP + phosphate + 2 H(+). The protein operates within pyrimidine metabolism; CTP biosynthesis via de novo pathway; CTP from UDP: step 2/2. Its activity is regulated as follows. Allosterically activated by GTP, when glutamine is the substrate; GTP has no effect on the reaction when ammonia is the substrate. The allosteric effector GTP functions by stabilizing the protein conformation that binds the tetrahedral intermediate(s) formed during glutamine hydrolysis. Inhibited by the product CTP, via allosteric rather than competitive inhibition. Functionally, catalyzes the ATP-dependent amination of UTP to CTP with either L-glutamine or ammonia as the source of nitrogen. Regulates intracellular CTP levels through interactions with the four ribonucleotide triphosphates. This chain is CTP synthase, found in Geotalea uraniireducens (strain Rf4) (Geobacter uraniireducens).